Here is a 657-residue protein sequence, read N- to C-terminus: Chemoreceptor McpA (657 aa).

Residues 1–5 are Cytoplasmic-facing; sequence MKRIR. A helical membrane pass occupies residues 6 to 29; the sequence is LVDLPLIIKIGFAPAFALLMLAVM. The Periplasmic segment spans residues 30–188; that stretch reads AGGAILVQKS…ESESAKRQAQ (159 aa). The chain crosses the membrane as a helical span at residues 189–212; that stretch reads ATAAMSVTIIMSLLTLGAVGALAF. Topologically, residues 213–657 are cytoplasmic; the sequence is LTVMTTRKSI…APASDGWEEF (445 aa). HAMP domains follow at residues 216 to 269 and 297 to 349; these read MTTR…HLEQ and QEAS…ETMK. The Methyl-accepting transducer domain maps to 354–583; sequence STDGLSTGAD…QSTAATHSLK (230 aa). Glutamate methyl ester (Gln) is present on Q378. Residues E385 and E392 each carry the glutamate methyl ester (Glu) modification. Q574 is subject to Glutamate methyl ester (Gln). The tract at residues 634–657 is disordered; the sequence is ARPGRSSGSAALAQAPASDGWEEF.

The protein belongs to the methyl-accepting chemotaxis (MCP) protein family.

It is found in the cell membrane. Functionally, chemotactic-signal transducers respond to changes in the concentration of attractants and repellents in the environment, transduce a signal from the outside to the inside of the cell, and facilitate sensory adaptation through the variation of the level of methylation. Attractants increase the level of methylation while repellents decrease the level of methylation. The protein is Chemoreceptor McpA (mcpA) of Caulobacter vibrioides (strain ATCC 19089 / CIP 103742 / CB 15) (Caulobacter crescentus).